A 364-amino-acid polypeptide reads, in one-letter code: Alanine racemase (364 aa).

The active-site Proton acceptor; specific for D-alanine is the K34. At K34 the chain carries N6-(pyridoxal phosphate)lysine. R129 is a binding site for substrate. Y259 functions as the Proton acceptor; specific for L-alanine in the catalytic mechanism. A substrate-binding site is contributed by M307.

The protein belongs to the alanine racemase family. Pyridoxal 5'-phosphate is required as a cofactor.

It carries out the reaction L-alanine = D-alanine. Its pathway is amino-acid biosynthesis; D-alanine biosynthesis; D-alanine from L-alanine: step 1/1. In terms of biological role, catalyzes the interconversion of L-alanine and D-alanine. May also act on other amino acids. This Coxiella burnetii (strain CbuK_Q154) (Coxiella burnetii (strain Q154)) protein is Alanine racemase (alr).